Reading from the N-terminus, the 242-residue chain is Adenosine 5'-phosphosulfate reductase (242 aa).

[4Fe-4S] cluster-binding residues include C125, C126, C208, and C211. The Nucleophile; cysteine thiosulfonate intermediate role is filled by C234.

The protein belongs to the PAPS reductase family. CysH subfamily. [4Fe-4S] cluster is required as a cofactor.

Its subcellular location is the cytoplasm. It catalyses the reaction [thioredoxin]-disulfide + sulfite + AMP + 2 H(+) = adenosine 5'-phosphosulfate + [thioredoxin]-dithiol. It functions in the pathway sulfur metabolism; hydrogen sulfide biosynthesis; sulfite from sulfate. In terms of biological role, catalyzes the formation of sulfite from adenosine 5'-phosphosulfate (APS) using thioredoxin as an electron donor. The sequence is that of Adenosine 5'-phosphosulfate reductase from Staphylococcus saprophyticus subsp. saprophyticus (strain ATCC 15305 / DSM 20229 / NCIMB 8711 / NCTC 7292 / S-41).